Reading from the N-terminus, the 350-residue chain is Opsin, longwave 563 nm (350 aa).

Residues 1–45 (HRLAGRHPQDNYEDSTQSSIFTYTNSNSTRGPFEGPNYHIAPRWV) lie on the Extracellular side of the membrane. Asn27 is a glycosylation site (N-linked (GlcNAc...) asparagine). A helical transmembrane segment spans residues 46–70 (YHLTSVWMLFVVVASVFTNGLVLAA). Topologically, residues 71-82 (TMKFKKLRHPLN) are cytoplasmic. Residues 83-108 (WILVNLAIADLAETVIASTISVVNQV) traverse the membrane as a helical segment. Residues 109–122 (HGYFVLGHPMCVLE) are Extracellular-facing. Cys119 and Cys196 are oxidised to a cystine. The chain crosses the membrane as a helical span at residues 123-142 (GYTVSLCGITGLWSLAIISW). Residues 143-161 (ERWLVVCKPFGNVRFDAKL) are Cytoplasmic-facing. Residues 162–185 (AIVGVAFSWIWSAVWTAPPIFGWS) form a helical membrane-spanning segment. Topologically, residues 186–211 (RYWPHGLKTSCGPDVFSGSSYPGVQS) are extracellular. A helical transmembrane segment spans residues 212-239 (YMIVLMITCCFLPLGIIVLCYLQVWLAI). Residues 240 to 261 (RAVAKQQKESESTQKAEKEVTR) are Cytoplasmic-facing. The helical transmembrane segment at 262–285 (MVVVMIVAYCVCWGPYTFFACFAA) threads the bilayer. Residues 286–293 (ANPGYAFH) are Extracellular-facing. Residues 294-318 (PLMAALPAYFAKSATIYNPIIYVFM) form a helical membrane-spanning segment. At Lys305 the chain carries N6-(retinylidene)lysine. At 319 to 350 (NRQFRNCILQLFGKKVDDGSELSSASKTEVSS) the chain is on the cytoplasmic side.

The protein belongs to the G-protein coupled receptor 1 family. Opsin subfamily. Phosphorylated on some or all of the serine and threonine residues present in the C-terminal region. In terms of tissue distribution, the color pigments are found in the cone photoreceptor cells.

The protein localises to the membrane. Visual pigments are the light-absorbing molecules that mediate vision. They consist of an apoprotein, opsin, covalently linked to cis-retinal. The polypeptide is Opsin, longwave 563 nm (Callithrix jacchus (White-tufted-ear marmoset)).